Here is a 713-residue protein sequence, read N- to C-terminus: Cyclomaltodextrin glucanotransferase (713 aa).

Residues 1–27 (MKKFLKSTAALALGLSLTFGLFSPAQA) form the signal peptide. An A1 region spans residues 28 to 165 (APDTSVSNKQ…NIKVIIDFAP (138 aa)). Asp-54, Asn-56, Asn-59, and Asn-60 together coordinate Ca(2+). Cysteines 70 and 77 form a disulfide. Ca(2+)-binding residues include Gly-78 and Asp-80. 127–128 (YW) is a binding site for substrate. Asn-166 lines the Ca(2+) pocket. Residues 166-229 (NHTSPASSDQ…NLYDLADLNH (64 aa)) form a b region. Substrate-binding positions include His-167 and 172 to 174 (SSD). Ile-217 contributes to the Ca(2+) binding site. Substrate is bound at residue 220–223 (NLYD). Ca(2+) is bound at residue Asp-226. Residues 230–433 (NNSTVDVYLK…LRKCNPAIAY (204 aa)) are A2. Position 254 (Arg-254) interacts with substrate. Asp-256 acts as the Nucleophile in catalysis. 259–260 (KH) is a binding site for substrate. Position 260 (His-260) interacts with Ca(2+). The Proton donor role is filled by Glu-284. Ala-342 provides a ligand contact to Ca(2+). His-354, Asp-398, and Arg-402 together coordinate substrate. Residues 434–522 (GSTQERWINN…GTAVWQYTAA (89 aa)) are c. The segment at 523-609 (TATPTIGHVG…SNVYDNFEVL (87 aa)) is d. The 82-residue stretch at 526–607 (PTIGHVGPMM…TASNVYDNFE (82 aa)) folds into the IPT/TIG domain. Asp-604 is a binding site for Ca(2+). The CBM20 domain maps to 608-713 (VLSGDQVSVR…TATINVNWQP (106 aa)). The interval 610–713 (SGDQVSVRFV…TATINVNWQP (104 aa)) is e.

It belongs to the glycosyl hydrolase 13 family. In terms of assembly, monomer. Ca(2+) is required as a cofactor.

It is found in the secreted. The enzyme catalyses Cyclizes part of a (1-&gt;4)-alpha-D-glucan chain by formation of a (1-&gt;4)-alpha-D-glucosidic bond.. This is Cyclomaltodextrin glucanotransferase (cgt) from Niallia circulans (Bacillus circulans).